The chain runs to 205 residues: Glycerol-3-phosphate acyltransferase (205 aa).

The next 6 helical transmembrane spans lie at 5 to 25, 56 to 76, 84 to 104, 114 to 134, 144 to 164, and 165 to 185; these read LIAT…YIIA, ICVL…AIAL, VPAL…YFGF, IGVV…VAIL, LGSL…LPFF, and HYPL…LWRH.

It belongs to the PlsY family. In terms of assembly, probably interacts with PlsX.

Its subcellular location is the cell membrane. It carries out the reaction an acyl phosphate + sn-glycerol 3-phosphate = a 1-acyl-sn-glycero-3-phosphate + phosphate. The protein operates within lipid metabolism; phospholipid metabolism. Catalyzes the transfer of an acyl group from acyl-phosphate (acyl-PO(4)) to glycerol-3-phosphate (G3P) to form lysophosphatidic acid (LPA). This enzyme utilizes acyl-phosphate as fatty acyl donor, but not acyl-CoA or acyl-ACP. The chain is Glycerol-3-phosphate acyltransferase from Shouchella clausii (strain KSM-K16) (Alkalihalobacillus clausii).